We begin with the raw amino-acid sequence, 124 residues long: Urotensin-2 (124 aa).

The N-terminal stretch at 1-20 (MYKLASCCLLFIGFLNPLLS) is a signal peptide. The propeptide occupies 21–110 (LPLLDSREIS…HLLARIWKPY (90 aa)). An intrachain disulfide couples Cys-118 to Cys-123.

The protein belongs to the urotensin-2 family. As to expression, brain specific.

It localises to the secreted. Functionally, highly potent vasoconstrictor. In Homo sapiens (Human), this protein is Urotensin-2 (UTS2).